A 312-amino-acid polypeptide reads, in one-letter code: Aminoacyl tRNA synthase complex-interacting multifunctional protein 1 (312 aa).

Met1 is subject to N-acetylmethionine. Ala2 carries the post-translational modification N-acetylalanine. Positions 6-46 (AVLKRLEQKGAEADQIIEYLKQQVSLLKEKAILQATLREEK) are required for fibroblast proliferation. The tract at residues 54 to 194 (KLKKEIEELK…APRTVVSGLV (141 aa)) is interaction with HSP90B1. Residues 101–114 (AVTTVSSGTKEQIK) form a required for endothelial cell death region. The tract at residues 107 to 147 (SGTKEQIKGGTGDEKKAKEKIEKKGEKKEKKQQSIAGSADS) is disordered. Over residues 111–138 (EQIKGGTGDEKKAKEKIEKKGEKKEKKQ) the composition is skewed to basic and acidic residues. The required for endothelial cell migration stretch occupies residues 114 to 192 (KGGTGDEKKA…EIAPRTVVSG (79 aa)). Lys137 participates in a covalent cross-link: Glycyl lysine isopeptide (Lys-Gly) (interchain with G-Cter in SUMO1). Position 140 is a phosphoserine (Ser140). The tRNA-binding domain occupies 151–252 (DVSRLDLRIG…NGSVPGDRIT (102 aa)). Lys269 carries the post-translational modification N6-succinyllysine.

As to quaternary structure, homodimer. Part of the multisynthetase complex (MSC), a multisubunit complex that groups tRNA ligases for Arg (RARS1), Asp (DARS1), Gln (QARS1), Ile (IARS1), Leu (LARS1), Lys (KARS1), Met (MARS1) the bifunctional ligase for Glu and Pro (EPRS1) and the auxiliary subunits AIMP1/p43, AIMP2/p38 and EEF1E1/p18. Interacts (via N-terminus) with RARS1 (via N-terminus). Part of a complex composed of RARS1, QARS1 and AIMP1. Interacts (via C-terminus) with SMURF2. Interacts (via N-terminus) with HSP90B1/gp96 (via C-terminus). Interacts with PSMA7. Interacts with TARS3. Cleaved by caspase-7 in response to apoptosis to produce EMAP-II.

It localises to the nucleus. The protein localises to the cytoplasm. Its subcellular location is the cytosol. The protein resides in the secreted. It is found in the endoplasmic reticulum. It localises to the golgi apparatus. Its function is as follows. Non-catalytic component of the multisynthase complex. Stimulates the catalytic activity of cytoplasmic arginyl-tRNA synthase. Binds tRNA. Possesses inflammatory cytokine activity. Negatively regulates TGF-beta signaling through stabilization of SMURF2 by binding to SMURF2 and inhibiting its SMAD7-mediated degradation. Involved in glucose homeostasis through induction of glucagon secretion at low glucose levels. Promotes dermal fibroblast proliferation and wound repair. Regulates KDELR1-mediated retention of HSP90B1/gp96 in the endoplasmic reticulum. Plays a role in angiogenesis by inducing endothelial cell migration at low concentrations and endothelian cell apoptosis at high concentrations. Induces maturation of dendritic cells and monocyte cell adhesion. Modulates endothelial cell responses by degrading HIF-1A through interaction with PSMA7. The sequence is that of Aminoacyl tRNA synthase complex-interacting multifunctional protein 1 (AIMP1) from Homo sapiens (Human).